The primary structure comprises 317 residues: MYDWLNALPKAELHLHLEGSLEPELLFALAERNKIALPWSDVETLRKAYAFNNLQEFLDLYYQGADVLRTSQDFYDLTWAYLLRCKEQNVIHTEPFFDPQTHTDRGIPFEVVLNGIAAALKDGEQQLGITSGLILSFLRHLSEDEAQKTLDQALPFRDAFVAVGLDSSEMGHPPSKFQRVFDRARHEGFLTVAHAGEEGPPEYIWEAIDLLKIQRIDHGVRAIEDERLMQRIIDEQIPLTVCPLSNTKLCVFDHMSQHNILDMLERGVKVTVNSDDPAYFGGYVTENFHALHEHLGMTQDQAKRLAQNSLDARLVKP.

Positions 14, 16, and 194 each coordinate Zn(2+). Residue E197 is the Proton donor of the active site. Position 275 (D275) interacts with Zn(2+). D276 contributes to the substrate binding site.

The protein belongs to the metallo-dependent hydrolases superfamily. Adenosine and AMP deaminases family. Adenine deaminase type 2 subfamily. Zn(2+) is required as a cofactor.

It carries out the reaction adenine + H2O + H(+) = hypoxanthine + NH4(+). Catalyzes the hydrolytic deamination of adenine to hypoxanthine. Plays an important role in the purine salvage pathway and in nitrogen catabolism. The sequence is that of Adenine deaminase from Pseudomonas fluorescens (strain Pf0-1).